Consider the following 28-residue polypeptide: Cyclotide ltri-A (28 aa).

Residues 1 to 28 constitute a cross-link (cyclopeptide (Gly-Asn)); the sequence is GVACGESCVYLPCFTVGCTCTSSQCFKN. Cystine bridges form between cysteine 4/cysteine 18, cysteine 8/cysteine 20, and cysteine 13/cysteine 25.

The protein belongs to the cyclotide family. Bracelet subfamily. Post-translationally, this is a cyclic peptide.

Probably participates in a plant defense mechanism. This is Cyclotide ltri-A from Leonia triandra.